A 400-amino-acid polypeptide reads, in one-letter code: Tryptophan synthase beta chain (400 aa).

Lys92 is subject to N6-(pyridoxal phosphate)lysine.

The protein belongs to the TrpB family. Tetramer of two alpha and two beta chains. Pyridoxal 5'-phosphate is required as a cofactor.

It carries out the reaction (1S,2R)-1-C-(indol-3-yl)glycerol 3-phosphate + L-serine = D-glyceraldehyde 3-phosphate + L-tryptophan + H2O. Its pathway is amino-acid biosynthesis; L-tryptophan biosynthesis; L-tryptophan from chorismate: step 5/5. The beta subunit is responsible for the synthesis of L-tryptophan from indole and L-serine. The chain is Tryptophan synthase beta chain from Neisseria gonorrhoeae.